A 179-amino-acid polypeptide reads, in one-letter code: Apoptosis regulator Bcl-2 homolog (179 aa).

Residues 76-95 carry the BH1 motif; sequence ELFKDLINWGRICGFIVFSA. Residues 126–141 carry the BH2 motif; the sequence is PWMISHGGQEEFLAFS.

It belongs to the Bcl-2 family. Interacts with host BECN1 (via BH3 homology domain); this interaction allows the virus to inhibit BECN1, and thus autophagy. Interacts with host BID. Interacts with host BAX.

Its subcellular location is the host mitochondrion. The protein localises to the host endoplasmic reticulum. Suppresses apoptosis in host cell to promote the viral replication. Has the ability to potentially bind to all the members of the proapoptotic Bcl-2 family. Inhibits autophagy by interacting with host Beclin 1 (BECN1). The chain is Apoptosis regulator Bcl-2 homolog from Ornithodoros (relapsing fever ticks).